Here is a 438-residue protein sequence, read N- to C-terminus: Ribosomal protein uS12 methylthiotransferase RimO (438 aa).

In terms of domain architecture, MTTase N-terminal spans 1–116; sequence MNVGFISLGC…IWKEIENLLD (116 aa). [4Fe-4S] cluster is bound by residues cysteine 10, cysteine 46, cysteine 79, cysteine 147, cysteine 151, and cysteine 154. In terms of domain architecture, Radical SAM core spans 133–363; sequence TTGSNMAYLK…MALQEKISRE (231 aa). The TRAM domain occupies 366 to 435; the sequence is EQKVGNVYKV…DYDLFGELYT (70 aa).

It belongs to the methylthiotransferase family. RimO subfamily. The cofactor is [4Fe-4S] cluster.

The protein resides in the cytoplasm. The enzyme catalyses L-aspartate(89)-[ribosomal protein uS12]-hydrogen + (sulfur carrier)-SH + AH2 + 2 S-adenosyl-L-methionine = 3-methylsulfanyl-L-aspartate(89)-[ribosomal protein uS12]-hydrogen + (sulfur carrier)-H + 5'-deoxyadenosine + L-methionine + A + S-adenosyl-L-homocysteine + 2 H(+). Catalyzes the methylthiolation of an aspartic acid residue of ribosomal protein uS12. The polypeptide is Ribosomal protein uS12 methylthiotransferase RimO (Alkaliphilus oremlandii (strain OhILAs) (Clostridium oremlandii (strain OhILAs))).